A 505-amino-acid polypeptide reads, in one-letter code: ATP synthase subunit beta (505 aa).

158–165 (GGAGVGKT) is an ATP binding site.

The protein belongs to the ATPase alpha/beta chains family. F-type ATPases have 2 components, CF(1) - the catalytic core - and CF(0) - the membrane proton channel. CF(1) has five subunits: alpha(3), beta(3), gamma(1), delta(1), epsilon(1). CF(0) has three main subunits: a(1), b(2) and c(9-12). The alpha and beta chains form an alternating ring which encloses part of the gamma chain. CF(1) is attached to CF(0) by a central stalk formed by the gamma and epsilon chains, while a peripheral stalk is formed by the delta and b chains.

It localises to the cell inner membrane. It carries out the reaction ATP + H2O + 4 H(+)(in) = ADP + phosphate + 5 H(+)(out). In terms of biological role, produces ATP from ADP in the presence of a proton gradient across the membrane. The catalytic sites are hosted primarily by the beta subunits. The sequence is that of ATP synthase subunit beta from Parabacteroides distasonis (strain ATCC 8503 / DSM 20701 / CIP 104284 / JCM 5825 / NCTC 11152).